The following is a 122-amino-acid chain: Large ribosomal subunit protein uL18 (122 aa).

It belongs to the universal ribosomal protein uL18 family. Part of the 50S ribosomal subunit; part of the 5S rRNA/L5/L18/L25 subcomplex. Contacts the 5S and 23S rRNAs.

Functionally, this is one of the proteins that bind and probably mediate the attachment of the 5S RNA into the large ribosomal subunit, where it forms part of the central protuberance. This Desulfitobacterium hafniense (strain DSM 10664 / DCB-2) protein is Large ribosomal subunit protein uL18.